A 919-amino-acid polypeptide reads, in one-letter code: Leucine--tRNA ligase (919 aa).

Residues 83–93 (PYPSGKLHMGH) carry the 'HIGH' region motif. The 'KMSKS' region motif lies at 670–674 (KMSKS). Lys-673 lines the ATP pocket.

Belongs to the class-I aminoacyl-tRNA synthetase family.

Its subcellular location is the cytoplasm. The catalysed reaction is tRNA(Leu) + L-leucine + ATP = L-leucyl-tRNA(Leu) + AMP + diphosphate. The chain is Leucine--tRNA ligase from Psychrobacter cryohalolentis (strain ATCC BAA-1226 / DSM 17306 / VKM B-2378 / K5).